Here is a 434-residue protein sequence, read N- to C-terminus: Meiosis-specific kinetochore protein (434 aa).

2 disordered regions span residues Met1–Thr102 and Val249–Lys289. The segment covering Lys46 to Ser62 has biased composition (basic and acidic residues). The span at Leu64–Ser76 shows a compositional bias: polar residues. Residues Ser334–Pro336 carry the POLO box domain (PBD)-binding motif. A required for localization to kinetochores region spans residues Glu391–Cys394. A disordered region spans residues Gln404–Leu424.

Interacts with CENPC. Interacts with PLK1; required for recruitment of PLK1 at kinetochores. In terms of tissue distribution, germ cell-specific. Expressed in both testis and ovary. Not expressed in other tissues.

It localises to the chromosome. The protein resides in the centromere. Its subcellular location is the kinetochore. Key regulator of kinetochore function during meiosis I: required both for mono-orientation of kinetochores on sister chromosomes and protection of centromeric cohesin from separase-mediated cleavage. Acts by facilitating kinetochore mono-orientation during meiosis I, when kinetochores on sister chromosomes face the same direction and are thus captured and pulled by spindle fibers from the same pole. Also required to prevent cleavage of cohesin at centromeres during meiosis I, possibly by acting as a regulator of the shugoshin-dependent protection pathway. Acts in collaboration with PLK1: required for PLK1 enrichment to kinetochores. Not required during meiosis II or mitosis. The sequence is that of Meiosis-specific kinetochore protein from Mus musculus (Mouse).